Consider the following 884-residue polypeptide: MAAKRKAAAMNAVDDEPVDPSDELAFYCLGGGNEVGRSCHIIQYKGKTVMLDAGMHPAKEGFSALPFFDEFDLSTVDILLISHFHVDHSSALPYVLSKTNFKGRVFMTHATKAIYKWLIQDNVRVNNTASSSDQRTTLYTEHDHLSTLPLIETIDFNTTHTINSIRITPYPAGHVLGAAMFLISIAGLNILFTGDYSREEDRHLIPATVPRGVKIDVLITESTFGISSNPPRLEREAALMKSITGVLNRGGRVLMPVFALGRAQELLLILEEYWETHPELQKIPIYYIGNTARRCMVVYQTYIGAMNDNIKRLFRQRMAEAEASGDKSVSAGPWDFKYVRSLRSLERFDDVGGCVMLASPGMLQTGTSRELLERWAPNERNGVVMTGYSVEGTMAKQLLNEPDQIHAVMSRAATGMGRTRMNGNDEEQKIMIPRRCTVDEISFAAHVDGVENRNFIEEVSAPVVILVHGEKHQMMRLKSKLLSLNAEKTVKVKVYTPANCEEVRIPFRKDKIAKVVGKLAQTTLPTDNEDGDGPLMAGVLVQNGFDLSLMAPDDLREYAGLATTTITCKQHITLSSASMDLIKWALEGTFGAIEEIGTDEDAEKEDQQSESEEKQRMKEEADEEIPMEKPQAYLVMGCVVIRYHPRTREVELQWEGNMMNDGIADAVMAVLLTVESSPASVKQSAKHNKHHHHHHHDETDTLKFLNPHAAQDAEERFARLLMMLEAQFGSDIAPIERPRVPSSTESATTTTNGNGNSKSDSEQLSSLESKTDGATPQDPDTLSELEAAELSRLHALGIPVPGIEIKVDKHVARVWLEDLEVECANAVLRDRVRVVIERAVETVASMWSVGRSSKTITNGGGKEIAGTGADDVASKPGLEVAARA.

Residues His-83, His-85, Asp-87, His-88, His-174, and Asp-195 each contribute to the Zn(2+) site. The Proton donor role is filled by His-446. His-468 provides a ligand contact to Zn(2+). Disordered stretches follow at residues 595 to 626 (EIGTDEDAEKEDQQSESEEKQRMKEEADEEIP), 678 to 705 (PASVKQSAKHNKHHHHHHHDETDTLKFL), and 734 to 780 (PIER…QDPD). Residues 605 to 619 (EDQQSESEEKQRMKE) are compositionally biased toward basic and acidic residues. The span at 684–695 (SAKHNKHHHHHH) shows a compositional bias: basic residues. Positions 742–758 (SSTESATTTTNGNGNSK) are enriched in low complexity. Residues 762-780 (EQLSSLESKTDGATPQDPD) show a composition bias toward polar residues.

It belongs to the metallo-beta-lactamase superfamily. RNA-metabolizing metallo-beta-lactamase-like family. CPSF2/YSH1 subfamily.

It localises to the nucleus. Functionally, component of the cleavage factor I (CF I) involved in pre-mRNA 3'-end processing. This Emericella nidulans (strain FGSC A4 / ATCC 38163 / CBS 112.46 / NRRL 194 / M139) (Aspergillus nidulans) protein is Endoribonuclease ysh1 (ysh1).